The chain runs to 319 residues: Putrescine hydroxycinnamoyltransferase 2 (319 aa).

Residues histidine 160 and aspartate 301 each act as proton acceptor in the active site.

This sequence belongs to the plant acyltransferase family.

In terms of biological role, hydroxycinnamoyl transferase that catalyzes the transfer of an acyl from p-coumaryol-CoA to putrescine, to produce coumaroyl putrescine. The polypeptide is Putrescine hydroxycinnamoyltransferase 2 (Oryza sativa subsp. japonica (Rice)).